The chain runs to 235 residues: Protein RESISTANCE TO PHYTOPHTHORA 1, chloroplastic (235 aa).

A chloroplast-targeting transit peptide spans 1–43 (MNSATTMSASVLNYQILKFFPPQKNGFLKSPLIRGKICRFCVS). Positions 53 to 66 (VIEDPKEETQEKSD) are enriched in basic and acidic residues. The interval 53-92 (VIEDPKEETQEKSDGVIVNSTEEEEERSGENSTSTGPSTV) is disordered. A run of 4 helical transmembrane segments spans residues 131-151 (FEVQ…NLIF), 158-178 (IWRL…LRAR), 188-208 (LNYL…FLKS), and 211-231 (VVWS…LGWL).

It is found in the plastid. Its subcellular location is the chloroplast. The protein resides in the membrane. Its function is as follows. Plays a positive role in the immune response to the oomycetes P.infestans, including induced oxidative burst and enhanced expression of defense-related genes. The polypeptide is Protein RESISTANCE TO PHYTOPHTHORA 1, chloroplastic (Solanum tuberosum (Potato)).